Reading from the N-terminus, the 123-residue chain is Protein Wnt-7b (123 aa).

Ser-1 carries O-palmitoleoyl serine; by PORCN lipidation. The tract at residues 33–61 (VEAVRATRLRQPTFLKIKKPRTYRKPMVT) is disordered linker. A disulfide bond links Cys-89 and Cys-104. Residue Asn-90 is glycosylated (N-linked (GlcNAc...) asparagine).

Belongs to the Wnt family. In terms of processing, palmitoleoylation is required for efficient binding to frizzled receptors. Depalmitoleoylation leads to Wnt signaling pathway inhibition.

It is found in the secreted. The protein resides in the extracellular space. Its subcellular location is the extracellular matrix. Its function is as follows. Ligand for members of the frizzled family of seven transmembrane receptors that functions in the canonical Wnt/beta-catenin signaling pathway. Required for normal fusion of the chorion and the allantois during placenta development. Required for central nervous system (CNS) angiogenesis and blood-brain barrier regulation. The protein is Protein Wnt-7b (WNT-7B) of Alopias vulpinus (Common thresher shark).